Here is a 387-residue protein sequence, read N- to C-terminus: SpoIVD-associated factor A (387 aa).

The 46-residue stretch at 2–47 (KIHIVQKGDSLWKIAEKYGVDVEEVKKLNTQLSNPDLIMPGMKIKV) folds into the LysM domain. Disordered regions lie at residues 49–106 (SEGV…MPNL) and 355–387 (NPNPNPYSAGVSMPMTNQPSVNQMFGRPEEENE). The segment covering 70–96 (KQEHPYAKEKPKSVVDVEDTKPKEKKS) has biased composition (basic and acidic residues). The segment covering 368–377 (PMTNQPSVNQ) has biased composition (polar residues).

The protein resides in the spore cortex. Probably involved in the assembly of some coat protein components implicated in both lysozyme resistance and germination. Could be required for the assembly of CotG. Associates with SpoIVD during the early stage of coat assembly. This chain is SpoIVD-associated factor A (safA), found in Bacillus subtilis (strain 168).